Reading from the N-terminus, the 212-residue chain is Peptide methionine sulfoxide reductase MsrA (212 aa).

Residue Cys-52 is part of the active site.

This sequence belongs to the MsrA Met sulfoxide reductase family.

The enzyme catalyses L-methionyl-[protein] + [thioredoxin]-disulfide + H2O = L-methionyl-(S)-S-oxide-[protein] + [thioredoxin]-dithiol. It carries out the reaction [thioredoxin]-disulfide + L-methionine + H2O = L-methionine (S)-S-oxide + [thioredoxin]-dithiol. In terms of biological role, has an important function as a repair enzyme for proteins that have been inactivated by oxidation. Catalyzes the reversible oxidation-reduction of methionine sulfoxide in proteins to methionine. In Salmonella agona (strain SL483), this protein is Peptide methionine sulfoxide reductase MsrA.